Here is a 158-residue protein sequence, read N- to C-terminus: Transcriptional repressor NrdR (158 aa).

The disordered stretch occupies residues 1 to 22 (MRCPYCGSEDTQVKDSRPAEDN). Residues 3–34 (CPYCGSEDTQVKDSRPAEDNTSIRRRRICPDC) fold into a zinc finger. Residues 11–22 (TQVKDSRPAEDN) are compositionally biased toward basic and acidic residues. An ATP-cone domain is found at 49 to 139 (LMVIKKTGRK…VYRDFSHAED (91 aa)).

This sequence belongs to the NrdR family. Zn(2+) serves as cofactor.

Negatively regulates transcription of bacterial ribonucleotide reductase nrd genes and operons by binding to NrdR-boxes. The protein is Transcriptional repressor NrdR of Rhizobium rhizogenes (strain K84 / ATCC BAA-868) (Agrobacterium radiobacter).